Reading from the N-terminus, the 151-residue chain is D-aminoacyl-tRNA deacylase (151 aa).

The Gly-cisPro motif, important for rejection of L-amino acids signature appears at Gly142–Pro143.

This sequence belongs to the DTD family. Homodimer.

It is found in the cytoplasm. The enzyme catalyses glycyl-tRNA(Ala) + H2O = tRNA(Ala) + glycine + H(+). The catalysed reaction is a D-aminoacyl-tRNA + H2O = a tRNA + a D-alpha-amino acid + H(+). Its function is as follows. An aminoacyl-tRNA editing enzyme that deacylates mischarged D-aminoacyl-tRNAs. Also deacylates mischarged glycyl-tRNA(Ala), protecting cells against glycine mischarging by AlaRS. Acts via tRNA-based rather than protein-based catalysis; rejects L-amino acids rather than detecting D-amino acids in the active site. By recycling D-aminoacyl-tRNA to D-amino acids and free tRNA molecules, this enzyme counteracts the toxicity associated with the formation of D-aminoacyl-tRNA entities in vivo and helps enforce protein L-homochirality. This chain is D-aminoacyl-tRNA deacylase, found in Psychrobacter cryohalolentis (strain ATCC BAA-1226 / DSM 17306 / VKM B-2378 / K5).